Here is a 950-residue protein sequence, read N- to C-terminus: 2-oxoglutarate dehydrogenase E1 component (950 aa).

The protein belongs to the alpha-ketoglutarate dehydrogenase family. As to quaternary structure, homodimer. Part of the 2-oxoglutarate dehydrogenase (OGDH) complex composed of E1 (2-oxoglutarate dehydrogenase), E2 (dihydrolipoamide succinyltransferase) and E3 (dihydrolipoamide dehydrogenase); the complex contains multiple copies of the three enzymatic components (E1, E2 and E3). Thiamine diphosphate is required as a cofactor.

The catalysed reaction is N(6)-[(R)-lipoyl]-L-lysyl-[protein] + 2-oxoglutarate + H(+) = N(6)-[(R)-S(8)-succinyldihydrolipoyl]-L-lysyl-[protein] + CO2. Its function is as follows. E1 component of the 2-oxoglutarate dehydrogenase (OGDH) complex which catalyzes the decarboxylation of 2-oxoglutarate, the first step in the conversion of 2-oxoglutarate to succinyl-CoA and CO(2). In Geobacillus kaustophilus (strain HTA426), this protein is 2-oxoglutarate dehydrogenase E1 component.